Consider the following 57-residue polypeptide: uncharacterized protein (57 aa).

2 helical membrane-spanning segments follow: residues 4–26 (VNIL…SELW) and 33–55 (ALGY…IAIL).

It is found in the cell membrane. This is an uncharacterized protein from Methanocaldococcus jannaschii (strain ATCC 43067 / DSM 2661 / JAL-1 / JCM 10045 / NBRC 100440) (Methanococcus jannaschii).